Reading from the N-terminus, the 488-residue chain is Germacrene A hydroxylase (488 aa).

Over 1-6 the chain is Cytoplasmic; sequence MELSFT. Residues 7-23 traverse the membrane as a helical; Signal-anchor for type II membrane protein segment; the sequence is TSIAVATIVFVLFKLAT. Over 24–488 the chain is Lumenal; sequence RPKSNKKLLP…KTHLVLVPSF (465 aa). Residues Asn-255, Asn-260, and Asn-379 are each glycosylated (N-linked (GlcNAc...) asparagine). Residue Cys-432 participates in heme binding.

Belongs to the cytochrome P450 family. Heme is required as a cofactor.

The protein resides in the endoplasmic reticulum membrane. The catalysed reaction is (+)-(R)-germacrene A + 3 reduced [NADPH--hemoprotein reductase] + 3 O2 = germacra-1(10),4,11(13)-trien-12-oate + 3 oxidized [NADPH--hemoprotein reductase] + 4 H2O + 4 H(+). It participates in secondary metabolite biosynthesis; terpenoid biosynthesis. Its function is as follows. Involved in the biosynthesis of germacrene-derived sesquiterpene lactones. Catalyzes three consecutive oxidations of germacrene A to produce germacrene A acid. Could also catalyze the three-step oxidation of non-natural substrate amorphadiene to artemisinic acid. The polypeptide is Germacrene A hydroxylase (Saussurea costus (Costus)).